The sequence spans 294 residues: MTKAVLTSISQLALKALLYEVSLSPKPGLVDRFDNGAHDDMSFMTFIDSMIALSPFFQAYIETGFAYAKEEPLLLFNRLRQLGQKAEETMFCATQGINTHKGLNFSMALLLGATGAYLARTPHLMTDLGCFSKEDTLAICRLVKSMTAHLIQTDLGHLNTKKEFTYGEQLFVTYGIKGPRGEASEGFTTLTDHALPYFRQMISQNDPETSQLRLLVYLMSIVEDGNLIHRGGIEAWKGVKADMRLLLQQDLSTTDLRLALSSYNQCLINQHLSPGGAADLLALTFYFAFLEKLL.

The protein belongs to the CitG/MdcB family.

It carries out the reaction 3'-dephospho-CoA + ATP = 2'-(5''-triphospho-alpha-D-ribosyl)-3'-dephospho-CoA + adenine. The polypeptide is Probable 2-(5''-triphosphoribosyl)-3'-dephosphocoenzyme-A synthase (Streptococcus pyogenes serotype M49 (strain NZ131)).